A 236-amino-acid chain; its full sequence is Ribonuclease HII (236 aa).

Positions 27-219 (RILCGVDEAG…VRRALDGAPP (193 aa)) constitute an RNase H type-2 domain. A divalent metal cation is bound by residues Asp33, Glu34, and Asp128. Residues 212-236 (RALDGAPPPAGDAVPQTDAKTAWAD) form a disordered region.

The protein belongs to the RNase HII family. It depends on Mn(2+) as a cofactor. Requires Mg(2+) as cofactor.

It localises to the cytoplasm. It carries out the reaction Endonucleolytic cleavage to 5'-phosphomonoester.. In terms of biological role, endonuclease that specifically degrades the RNA of RNA-DNA hybrids. The sequence is that of Ribonuclease HII from Ralstonia nicotianae (strain ATCC BAA-1114 / GMI1000) (Ralstonia solanacearum).